Here is a 485-residue protein sequence, read N- to C-terminus: Glutamate--tRNA ligase (485 aa).

The short motif at 11-21 (PSPTGLLHIGN) is the 'HIGH' region element. The 'KMSKS' region signature appears at 255 to 259 (KLSKR). Lys258 is an ATP binding site.

Belongs to the class-I aminoacyl-tRNA synthetase family. Glutamate--tRNA ligase type 1 subfamily. In terms of assembly, monomer.

It is found in the cytoplasm. The enzyme catalyses tRNA(Glu) + L-glutamate + ATP = L-glutamyl-tRNA(Glu) + AMP + diphosphate. Catalyzes the attachment of glutamate to tRNA(Glu) in a two-step reaction: glutamate is first activated by ATP to form Glu-AMP and then transferred to the acceptor end of tRNA(Glu). The chain is Glutamate--tRNA ligase from Streptococcus mutans serotype c (strain ATCC 700610 / UA159).